A 297-amino-acid chain; its full sequence is Acetaldehyde dehydrogenase (297 aa).

18–21 (TGNI) contacts NAD(+). Residue cysteine 133 is the Acyl-thioester intermediate of the active site. NAD(+) contacts are provided by residues 165 to 173 (SAGPATRLN) and asparagine 275.

The protein belongs to the acetaldehyde dehydrogenase family.

The enzyme catalyses acetaldehyde + NAD(+) + CoA = acetyl-CoA + NADH + H(+). The polypeptide is Acetaldehyde dehydrogenase (Spirochaeta aurantia).